Here is a 98-residue protein sequence, read N- to C-terminus: Integration host factor subunit alpha (98 aa).

Positions 49 to 71 (FGNFDLRDKNQRPGRNPKTGEDI) are disordered.

It belongs to the bacterial histone-like protein family. As to quaternary structure, heterodimer of an alpha and a beta chain.

Functionally, this protein is one of the two subunits of integration host factor, a specific DNA-binding protein that functions in genetic recombination as well as in transcriptional and translational control. This is Integration host factor subunit alpha from Shewanella oneidensis (strain ATCC 700550 / JCM 31522 / CIP 106686 / LMG 19005 / NCIMB 14063 / MR-1).